We begin with the raw amino-acid sequence, 130 residues long: Large ribosomal subunit protein bL12c (130 aa).

The protein belongs to the bacterial ribosomal protein bL12 family. Homodimer. Part of the ribosomal stalk of the 50S ribosomal subunit. Forms a multimeric L10(L12)X complex, where L10 forms an elongated spine to which 2 to 4 L12 dimers bind in a sequential fashion. Binds GTP-bound translation factors.

The protein resides in the plastid. It localises to the chloroplast. Functionally, forms part of the ribosomal stalk which helps the ribosome interact with GTP-bound translation factors. Is thus essential for accurate translation. The protein is Large ribosomal subunit protein bL12c of Cyanidium caldarium (Red alga).